The sequence spans 901 residues: Protein translocase subunit SecA (901 aa).

ATP-binding positions include Q87, 105–109, and D512; that span reads GEGKT. The tract at residues 859-901 is disordered; that stretch reads HQDDDSAAAAALAAQTGERKVGRNDPCPCGSGKKYKQCHGRLQ. The Zn(2+) site is built by C885, C887, C896, and H897. Basic residues predominate over residues 891–901; sequence KKYKQCHGRLQ.

The protein belongs to the SecA family. In terms of assembly, monomer and homodimer. Part of the essential Sec protein translocation apparatus which comprises SecA, SecYEG and auxiliary proteins SecDF-YajC and YidC. The cofactor is Zn(2+).

It localises to the cell inner membrane. The protein resides in the cytoplasm. The enzyme catalyses ATP + H2O + cellular proteinSide 1 = ADP + phosphate + cellular proteinSide 2.. Functionally, part of the Sec protein translocase complex. Interacts with the SecYEG preprotein conducting channel. Has a central role in coupling the hydrolysis of ATP to the transfer of proteins into and across the cell membrane, serving both as a receptor for the preprotein-SecB complex and as an ATP-driven molecular motor driving the stepwise translocation of polypeptide chains across the membrane. The protein is Protein translocase subunit SecA of Shigella dysenteriae serotype 1 (strain Sd197).